Reading from the N-terminus, the 388-residue chain is DNA ADP-ribosyl transferase-DNA ADP-ribosyl glycohydrolase fusion protein (388 aa).

In terms of domain architecture, DarT spans 6-197; that stretch reads RELYYITHID…PVIPDPTFFF (192 aa). NAD(+)-binding positions include 10-12 and R50; that span reads YIT. The NAD(+)-binding element stretch occupies residues 34–52; that stretch reads QSINCKKVYDNSIVLKRKS. Catalysis depends on R50, which acts as the Proton acceptor. The interval 107-152 is ADP-ribosylating turn-turn loop; the sequence is TDGNAASSETQIYRKSEIKNIKNIISVKDMEYWREEDGSKRKIMAE. E152 is a catalytic residue. Residues 196–376 enclose the Macro domain; it reads FFLPNREIKL…IYLPLEKRIP (181 aa). Residues 215-216, 227-229, T301, 339-343, and 371-372 each bind ADP-D-ribose; these read DM, SVN, GCGLG, and LE.

This sequence in the N-terminal section; belongs to the DarT ADP-ribosyltransferase family. The protein in the C-terminal section; belongs to the DarG ADP-ribosyl glycohydrolase family.

It carries out the reaction an N-(ADP-alpha-D-ribosyl)-thymidine in DNA + H2O = a thymidine in DNA + ADP-D-ribose. The catalysed reaction is a thymidine in DNA + NAD(+) = an N-(ADP-alpha-D-ribosyl)-thymidine in DNA + nicotinamide + H(+). Functionally, a fusion protein of the toxic and antitoxin components of a hybrid type II/IV toxin-antitoxin (TA) system. The N-terminal domain ADP-ribosylates ssDNA on a thymidine residue, while the C-terminal domain removes the modification, neutralizing the toxic effect. The polypeptide is DNA ADP-ribosyl transferase-DNA ADP-ribosyl glycohydrolase fusion protein (Thermosipho africanus (strain H17ap60334)).